A 110-amino-acid chain; its full sequence is UPF0060 membrane protein SACE_5620 (110 aa).

4 helical membrane passes run 8–28 (VVLF…VWQG), 34–54 (GLLW…VATF), 63–83 (ILAA…VVVD), and 89–109 (RWDL…MYAP).

Belongs to the UPF0060 family.

The protein localises to the cell membrane. The chain is UPF0060 membrane protein SACE_5620 from Saccharopolyspora erythraea (strain ATCC 11635 / DSM 40517 / JCM 4748 / NBRC 13426 / NCIMB 8594 / NRRL 2338).